A 219-amino-acid polypeptide reads, in one-letter code: Carbonic anhydrase 1 (219 aa).

Positions 39, 41, 98, and 101 each coordinate Zn(2+).

This sequence belongs to the beta-class carbonic anhydrase family. As to quaternary structure, oligomer. Requires Zn(2+) as cofactor.

It carries out the reaction hydrogencarbonate + H(+) = CO2 + H2O. Its function is as follows. Reversible hydration of carbon dioxide. Carbon dioxide formed in the bicarbonate-dependent decomposition of cyanate by cyanase (CynS) diffuses out of the cell faster than it would be hydrated to bicarbonate, so the apparent function of this enzyme is to catalyze the hydration of carbon dioxide and thus prevent depletion of cellular bicarbonate. This is Carbonic anhydrase 1 (cynT) from Escherichia coli O157:H7.